The sequence spans 86 residues: Large ribosomal subunit protein bL31B (86 aa).

Belongs to the bacterial ribosomal protein bL31 family. Type B subfamily. In terms of assembly, part of the 50S ribosomal subunit.

This is Large ribosomal subunit protein bL31B from Burkholderia lata (strain ATCC 17760 / DSM 23089 / LMG 22485 / NCIMB 9086 / R18194 / 383).